A 926-amino-acid polypeptide reads, in one-letter code: Neurofilament medium polypeptide (926 aa).

The segment covering 1-10 (MSYTLDSLGN) has biased composition (polar residues). Disordered regions lie at residues 1–51 (MSYT…VSSS) and 79–102 (QSSS…SNEK). S2 is modified (N-acetylserine). Residues 2-104 (SYTLDSLGNP…KLSRSNEKEQ (103 aa)) form a head region. The span at 21–44 (RSSFSRISGSPSSGFRSQSWSRGS) shows a compositional bias: low complexity. S30 carries the post-translational modification Phosphoserine. R42 carries the post-translational modification Omega-N-methylarginine. An O-linked (GlcNAc) threonine glycan is attached at T47. The residue at position 99 (S99) is a Phosphoserine. In terms of domain architecture, IF rod spans 101–412 (EKEQIQGLND…KLLEGEETRF (312 aa)). Residues 105–136 (IQGLNDRFAGYIEKVHYLEQQNKEIEAEIQAL) are coil 1A. The segment at 137 to 149 (RQKQASHAQLGDA) is linker 1. A coil 1B region spans residues 150–248 (YDQEIRELRA…EEEVADLLAQ (99 aa)). A Phosphoserine modification is found at S226. The tract at residues 249 to 265 (IQASHITVERKDYLKTD) is linker 12. The coil 2A stretch occupies residues 266-287 (ISTALKEIRSQLESHSDQNMHQ). The tract at residues 288-291 (AEEW) is linker 2. Positions 292 to 412 (FKCRYAKLTE…KLLEGEETRF (121 aa)) are coil 2B. Position 320 is a phosphotyrosine (Y320). Residues S346, S418, S430, S468, and S484 each carry the phosphoserine modification. The segment at 413–926 (STFAGSITGP…AIVKEVTQSD (514 aa)) is tail. The tract at residues 487-860 (EEVKEEEAEE…EKKGGDKSEE (374 aa)) is disordered. The segment covering 490–507 (KEEEAEEKEEKEEAEEEV) has biased composition (acidic residues). Repeat 1 spans residues 512–516 (KSPVK). Positions 512-698 (KSPVKATAPE…KSPAPKSPVE (187 aa)) are 17 X 5 AA approximate tandem repeats of K-S-P-[TVEA]-[AKETP]. S513 carries the phosphoserine modification. A compositionally biased stretch (acidic residues) spans 523-543 (KEEEGEKEEEEGQEEEEEEEE). Positions 544–563 (AAKSDQAEEGGSEKEGSSEK) are enriched in basic and acidic residues. Residues S547, S555, S560, and S561 each carry the phosphoserine modification. The segment covering 564-584 (EEGEQEEEGETEAEGEGEEAA) has biased composition (acidic residues). At T574 the chain carries Phosphothreonine. The span at 585 to 619 (AEAKEEKKMEEKAEEVAPKEELAAEAKVEKPEKAK) shows a compositional bias: basic and acidic residues. Repeat copies occupy residues 619–623 (KSPVA), 624–628 (KSPTT), 629–633 (KSPTA), 634–638 (KSPEA), 639–643 (KSPEA), 644–648 (KSPTA), 649–653 (KSPTA), 654–658 (KSPVA), 659–663 (KSPTA), 664–668 (KSPEA), 669–673 (KSPEA), 674–678 (KSPTA), 679–683 (KSPTA), 684–688 (KSPAA), 689–693 (KSPAP), and 694–698 (KSPVE). T628 carries the post-translational modification Phosphothreonine. Phosphoserine is present on residues S630, S635, and S640. At T647 the chain carries Phosphothreonine. Phosphoserine occurs at positions 650 and 655. S665 and S670 each carry phosphoserine. Residues 673 to 692 (AKSPTAKSPTAKSPAAKSPA) are compositionally biased toward low complexity. The residue at position 677 (T677) is a Phosphothreonine. Residues S680, S685, S690, S695, S727, S751, S757, S771, S831, and S847 each carry the phosphoserine modification. 3 stretches are compositionally biased toward basic and acidic residues: residues 696–764 (PVEE…EEVP), 771–811 (SPEK…KEDI), and 826–838 (TKEK…EEKG). Residues 849–860 (GDEKKGGDKSEE) are compositionally biased toward basic and acidic residues.

As to quaternary structure, forms heterodimers with NEFL; which can further hetero-oligomerize (in vitro). Forms heterodimers with INA (in vitro). Post-translationally, phosphorylated on a number of serine residues in the repeated K-S-P tripeptide motif. Phosphorylation of NFH may result in the formation of interfilament cross-links that are important in the maintenance of axonal caliber. Phosphorylation seems to play a major role in the functioning of the larger neurofilament polypeptides (NF-M and NF-H), the levels of phosphorylation being altered developmentally and coincidentally with a change in the neurofilament function. In terms of processing, phosphorylated in the head and rod regions by the PKC kinase PKN1, leading to the inhibition of polymerization.

The protein localises to the cytoplasm. It is found in the cytoskeleton. The protein resides in the cell projection. Its subcellular location is the axon. Functionally, neurofilaments usually contain three intermediate filament proteins: NEFL, NEFM, and NEFH which are involved in the maintenance of neuronal caliber. May additionally cooperate with the neuronal intermediate filament proteins PRPH and INA to form neuronal filamentous networks. The sequence is that of Neurofilament medium polypeptide (NEFM) from Bos taurus (Bovine).